The following is a 287-amino-acid chain: UTP--glucose-1-phosphate uridylyltransferase 1 (287 aa).

This sequence belongs to the UDPGP type 2 family.

The catalysed reaction is alpha-D-glucose 1-phosphate + UTP + H(+) = UDP-alpha-D-glucose + diphosphate. It participates in glycolipid metabolism; diglucosyl-diacylglycerol biosynthesis. Functionally, catalyzes the formation of UDP-glucose from glucose-1-phosphate and UTP. This is an intermediate step in the biosynthesis of diglucosyl-diacylglycerol (Glc2-DAG), i.e. a glycolipid found in the membrane, which is also used as a membrane anchor for lipoteichoic acid (LTA). This chain is UTP--glucose-1-phosphate uridylyltransferase 1 (gtaB1), found in Staphylococcus saprophyticus subsp. saprophyticus (strain ATCC 15305 / DSM 20229 / NCIMB 8711 / NCTC 7292 / S-41).